A 397-amino-acid chain; its full sequence is Tryptophan synthase beta chain (397 aa).

Lysine 88 carries the N6-(pyridoxal phosphate)lysine modification.

Belongs to the TrpB family. Tetramer of two alpha and two beta chains. Pyridoxal 5'-phosphate serves as cofactor.

The catalysed reaction is (1S,2R)-1-C-(indol-3-yl)glycerol 3-phosphate + L-serine = D-glyceraldehyde 3-phosphate + L-tryptophan + H2O. It participates in amino-acid biosynthesis; L-tryptophan biosynthesis; L-tryptophan from chorismate: step 5/5. In terms of biological role, the beta subunit is responsible for the synthesis of L-tryptophan from indole and L-serine. This is Tryptophan synthase beta chain (trpB) from Haemophilus influenzae (strain ATCC 51907 / DSM 11121 / KW20 / Rd).